The sequence spans 1032 residues: Vacuolar membrane protease (1032 aa).

At M1–P11 the chain is on the cytoplasmic side. The helical transmembrane segment at G12–V32 threads the bilayer. Residues H33–L426 lie on the Vacuolar side of the membrane. N-linked (GlcNAc...) asparagine glycosylation is found at N50 and N142. Zn(2+)-binding residues include H207 and D219. The active-site Proton acceptor is E253. Zn(2+) is bound by residues E254, E279, and H352. A helical transmembrane segment spans residues F427–I447. Over L448–R482 the chain is Cytoplasmic. A helical membrane pass occupies residues F483–K503. Topologically, residues F504–S511 are vacuolar. The chain crosses the membrane as a helical span at residues S512–M532. The Cytoplasmic segment spans residues R533 to R545. The helical transmembrane segment at G546–A566 threads the bilayer. Over E567–A573 the chain is Vacuolar. The chain crosses the membrane as a helical span at residues A574–L594. The Cytoplasmic portion of the chain corresponds to E595–W708. Residues R616–P631 are compositionally biased toward basic and acidic residues. The tract at residues R616 to R666 is disordered. Acidic residues predominate over residues E632–T649. Residues I709–V729 form a helical membrane-spanning segment. At A730 to L745 the chain is on the vacuolar side. Residues V746–I766 form a helical membrane-spanning segment. Residues H767–V773 lie on the Cytoplasmic side of the membrane. A helical membrane pass occupies residues P774–F794. At S795–V1032 the chain is on the vacuolar side. Residues N812 and N884 are each glycosylated (N-linked (GlcNAc...) asparagine).

This sequence belongs to the peptidase M28 family. It depends on Zn(2+) as a cofactor.

It localises to the vacuole membrane. Functionally, may be involved in vacuolar sorting and osmoregulation. The sequence is that of Vacuolar membrane protease from Fusarium vanettenii (strain ATCC MYA-4622 / CBS 123669 / FGSC 9596 / NRRL 45880 / 77-13-4) (Fusarium solani subsp. pisi).